The sequence spans 389 residues: Phospho-N-acetylmuramoyl-pentapeptide-transferase (389 aa).

10 helical membrane-spanning segments follow: residues 25–45 (RAVMATITALGIGLVCGPWVI), 73–93 (TMGGVLILIGIAVATLLWGDL), 97–117 (FIWIVMLVTFGFGVIGWVDDY), 135–155 (FWQSVIGLFAAVYLAFSVSEA), 190–210 (ISYPLGVWGFIVLTYFVIVGA), 222–242 (GLVIMPVVLVGGSLGVFAYVM), 258–278 (GAGELLIFCSAMGGAGLAFLW), 286–306 (VFMGDVGALALGGALGTVAVI), 311–331 (IVLFIMGGIFVAETLSVMLQV), and 366–386 (QVVVRFWIITLMLCLFGLSTL).

The protein belongs to the glycosyltransferase 4 family. MraY subfamily. Requires Mg(2+) as cofactor.

Its subcellular location is the cell inner membrane. It catalyses the reaction UDP-N-acetyl-alpha-D-muramoyl-L-alanyl-gamma-D-glutamyl-meso-2,6-diaminopimeloyl-D-alanyl-D-alanine + di-trans,octa-cis-undecaprenyl phosphate = di-trans,octa-cis-undecaprenyl diphospho-N-acetyl-alpha-D-muramoyl-L-alanyl-D-glutamyl-meso-2,6-diaminopimeloyl-D-alanyl-D-alanine + UMP. It functions in the pathway cell wall biogenesis; peptidoglycan biosynthesis. Its function is as follows. Catalyzes the initial step of the lipid cycle reactions in the biosynthesis of the cell wall peptidoglycan: transfers peptidoglycan precursor phospho-MurNAc-pentapeptide from UDP-MurNAc-pentapeptide onto the lipid carrier undecaprenyl phosphate, yielding undecaprenyl-pyrophosphoryl-MurNAc-pentapeptide, known as lipid I. The sequence is that of Phospho-N-acetylmuramoyl-pentapeptide-transferase from Burkholderia ambifaria (strain ATCC BAA-244 / DSM 16087 / CCUG 44356 / LMG 19182 / AMMD) (Burkholderia cepacia (strain AMMD)).